Consider the following 348-residue polypeptide: Erlin-1 (348 aa).

Over 1–7 (MNMTQAR) the chain is Cytoplasmic. The helical transmembrane segment at 8 to 28 (VLVAAVVGLVAVLLYASIHKI) threads the bilayer. Residues 29-348 (EEGHLAVYYR…NLIQNKESTG (320 aa)) lie on the Lumenal side of the membrane. Asn-108 carries N-linked (GlcNAc...) asparagine glycosylation. Position 269 is an N6-acetyllysine (Lys-269). Basic and acidic residues predominate over residues 321-333 (TGRESSHPSKEAL). The disordered stretch occupies residues 321–348 (TGRESSHPSKEALEPSGENLIQNKESTG). Positions 339–348 (NLIQNKESTG) are enriched in polar residues.

The protein belongs to the band 7/mec-2 family. As to quaternary structure, forms a heteromeric complex with ERLIN2. In complex with ERLIN2, interacts with RNF170. Interacts with AMFR and SYVN1. Deubiquitinated by USP25; leading to stabilization.

Its subcellular location is the endoplasmic reticulum membrane. Its function is as follows. Component of the ERLIN1/ERLIN2 complex which mediates the endoplasmic reticulum-associated degradation (ERAD) of inositol 1,4,5-trisphosphate receptors (IP3Rs). Involved in regulation of cellular cholesterol homeostasis by regulation the SREBP signaling pathway. Binds cholesterol and may promote ER retention of the SCAP-SREBF complex. This chain is Erlin-1, found in Pongo abelii (Sumatran orangutan).